A 289-amino-acid polypeptide reads, in one-letter code: MAWRNRRGALRAILSGSACVRPASVYDAISIRIADDLGFPLGMFGGSVASLAILGDPDIALITLTELAEQMRRMARAAALPVLVDADHGYGNALNVRRTVQELEAAGAAGLTIEDTLLPQAYGEASPQLISREEGLGKIKAALDARLDPSLVIVGRTGACAITSLDDAIDRAVAYQAAGVDALFFTGVKTRPQLDAIAAATTLPIVLGSPPAELTDWDYLAAQRVRIAVQGHAPIAAATEAVSKALSALRDGAAPKQLTGLASAELIDRVTRASLVEERGAQFLGLKRE.

S47 serves as a coordination point for substrate. Residue D85 participates in Mg(2+) binding. Residues R156 and H232 each coordinate substrate.

This sequence belongs to the isocitrate lyase/PEP mutase superfamily. Oxaloacetate decarboxylase family. As to quaternary structure, homotetramer; dimer of dimers. It depends on Mg(2+) as a cofactor.

The enzyme catalyses oxaloacetate + H(+) = pyruvate + CO2. Its function is as follows. Catalyzes the decarboxylation of oxaloacetate into pyruvate. Seems to play a role in maintaining cellular concentrations of bicarbonate and pyruvate. The protein is Oxaloacetate decarboxylase of Rhodopseudomonas palustris (strain BisB5).